Consider the following 512-residue polypeptide: Putative ankyrin repeat protein FPV233 (512 aa).

8 ANK repeats span residues 45–73 (IPFI…NVNQ), 77–106 (DDTY…QCSV), 136–168 (IQDI…DINM), 172–201 (HGNS…NPNI), 205–236 (TNKS…NTDP), 238–262 (LSHA…SINA), 266–296 (YGNT…DVNA), and 301–329 (RNLT…DINS).

The polypeptide is Putative ankyrin repeat protein FPV233 (Vertebrata (FPV)).